Consider the following 335-residue polypeptide: D-arabinose 1-dehydrogenase (335 aa).

Tyr58 serves as the catalytic Proton donor. His124 contacts substrate. Ser221–Ala287 contributes to the NAD(+) binding site.

Belongs to the aldo/keto reductase family. Aldo/keto reductase 2 subfamily.

It carries out the reaction D-arabinose + NAD(+) = D-arabinono-1,4-lactone + NADH + H(+). This is D-arabinose 1-dehydrogenase (ARA2) from Saccharomyces cerevisiae (strain ATCC 204508 / S288c) (Baker's yeast).